Reading from the N-terminus, the 328-residue chain is MAHSKQPSHFQSLMLLQWPLSYLAIFWILQPLFVYLLFTSLWPLPVLYFAWLFLDWKTPERGGRRSAWVRNWCVWTHIRDYFPITILKTKDLSPEHNYLMGVHPHGLLTFGAFCNFCTEATGFSKTFPGITPHLATLSWFFKIPFVREYLMAKGVCSVSQPAINYLLSHGTGNLVGIVVGGVGEALQSVPNTTTLILQKRKGFVRTALQHGAHLVPTFTFGETEVYDQVLFHKDSRMYKFQSCFRRIFGFYCCVFYGQSFCQGSTGLLPYSRPIVTVVGEPLPLPQIEKPSQEMVDKYHALYMDALHKLFDQHKTHYGCSETQKLFFL.

Helical transmembrane passes span 12–32 and 34–53; these read SLML…LQPL and VYLL…AWLF.

The protein belongs to the diacylglycerol acyltransferase family. Predominantly expressed in skin, where it is limited to the sebaceous gland. Expressed in more mature, centrally located cells just before their rupture and sebum release. Also expressed in all tissues except spleen. Expressed at higher level in thymus, prostate and testis.

It localises to the endoplasmic reticulum membrane. It catalyses the reaction a long chain fatty alcohol + a fatty acyl-CoA = a wax ester + CoA. The catalysed reaction is 1,2-di-(9Z-octadecenoyl)-sn-glycerol + (9Z)-octadecenoyl-CoA = 1,2,3-tri-(9Z-octadecenoyl)-glycerol + CoA. The enzyme catalyses hexadecan-1-ol + (9Z)-octadecenoyl-CoA = hexadecanyl (9Z)-octadecenoate + CoA. It carries out the reaction decan-1-ol + (9Z)-octadecenoyl-CoA = 1-O-decyl-(9Z)-octadecenoate + CoA. It catalyses the reaction (9Z)-hexadecen-1-ol + (9Z)-octadecenoyl-CoA = 1-O-(9Z)-hexadecenyl (9Z)-octadecenoate + CoA. The catalysed reaction is octadecan-1-ol + (9Z)-octadecenoyl-CoA = 1-O-octadecyl (9Z)-octadecenoate + CoA. The enzyme catalyses (9Z)-octadecen-1-ol + (9Z)-octadecenoyl-CoA = 1-O-(9Z)-octadecenyl (9Z)-octadecenoate + CoA. It carries out the reaction hexadecan-1-ol + hexadecanoyl-CoA = hexadecanyl hexadecanoate + CoA. It catalyses the reaction hexadecan-1-ol + (9Z)-hexadecenoyl-CoA = 1-O-hexadecyl (9Z)-hexadecenoate + CoA. The catalysed reaction is hexadecan-1-ol + octadecanoyl-CoA = hexadecanyl octadecanoate + CoA. The enzyme catalyses eicosan-1-ol + (9Z)-octadecenoyl-CoA = 1-O-eicosanyl (9Z)-octadecenoate + CoA. Its function is as follows. Acyltransferase that catalyzes the formation of ester bonds between fatty alcohols and fatty acyl-CoAs to form wax monoesters. Shows a strong preference for decyl alcohol (C10), with less activity towards C16 and C18 alcohols. Shows a strong preference for saturated acyl-CoAs. The protein is Acyl-CoA wax alcohol acyltransferase 1 (AWAT1) of Homo sapiens (Human).